Here is a 184-residue protein sequence, read N- to C-terminus: Shikimate kinase (184 aa).

Residue 20 to 25 (GVGKSR) participates in ATP binding. A Mg(2+)-binding site is contributed by S24. Substrate is bound by residues D42, R66, and G88. R127 serves as a coordination point for ATP. R146 provides a ligand contact to substrate. ATP is bound at residue R162.

It belongs to the shikimate kinase family. In terms of assembly, monomer. Requires Mg(2+) as cofactor.

It localises to the cytoplasm. It catalyses the reaction shikimate + ATP = 3-phosphoshikimate + ADP + H(+). It functions in the pathway metabolic intermediate biosynthesis; chorismate biosynthesis; chorismate from D-erythrose 4-phosphate and phosphoenolpyruvate: step 5/7. Its function is as follows. Catalyzes the specific phosphorylation of the 3-hydroxyl group of shikimic acid using ATP as a cosubstrate. The sequence is that of Shikimate kinase from Thermus thermophilus (strain ATCC 27634 / DSM 579 / HB8).